The primary structure comprises 602 residues: Major facilitator superfamily multidrug transporter mfsB (602 aa).

Helical transmembrane passes span 29–49 (FVLA…FPYV), 67–87 (LYAG…GMFW), 98–118 (PVLI…GFAP), 128–148 (ALGG…AEIV), 160–180 (IMPF…GALA), 201–221 (FLLP…VGFL), 329–349 (IVAY…IPVF), 378–398 (FMLA…FPFV), 411–431 (VLLV…LPSI), 439–459 (LALI…AILL), 468–486 (VLGS…SRAL), and 505–525 (IIAW…SFWM). Positions 527 to 602 (ESEPRRDSEK…RSNPLAFAED (76 aa)) are disordered. Basic and acidic residues predominate over residues 528 to 538 (SEPRRDSEKAG).

It belongs to the major facilitator superfamily.

It localises to the membrane. Functionally, major facilitator superfamily transporter that may be involved in A.fumigatus adaptation to azoles such as vorizonazole. The chain is Major facilitator superfamily multidrug transporter mfsB from Aspergillus fumigatus (strain ATCC MYA-4609 / CBS 101355 / FGSC A1100 / Af293) (Neosartorya fumigata).